Reading from the N-terminus, the 843-residue chain is Protein translocase subunit SecA 1 (843 aa).

Residues Q91, 109–113 (GEGKT), and D498 contribute to the ATP site. Basic and acidic residues predominate over residues 799-813 (EAKHVSAEDGKEKVK). Positions 799-826 (EAKHVSAEDGKEKVKPKPIVKGDQVGRN) are disordered. 4 residues coordinate Zn(2+): C829, C831, C840, and H841.

It belongs to the SecA family. As to quaternary structure, monomer and homodimer. Part of the essential Sec protein translocation apparatus which comprises SecA, SecYEG and auxiliary proteins SecDF. Other proteins may also be involved. Zn(2+) is required as a cofactor.

It is found in the cell membrane. The protein localises to the cytoplasm. It carries out the reaction ATP + H2O + cellular proteinSide 1 = ADP + phosphate + cellular proteinSide 2.. Part of the Sec protein translocase complex. Interacts with the SecYEG preprotein conducting channel. Has a central role in coupling the hydrolysis of ATP to the transfer of proteins into and across the cell membrane, serving as an ATP-driven molecular motor driving the stepwise translocation of polypeptide chains across the membrane. The chain is Protein translocase subunit SecA 1 from Staphylococcus aureus (strain MRSA252).